Reading from the N-terminus, the 408-residue chain is Argininosuccinate synthase (408 aa).

ATP-binding positions include 10 to 18 (AYSGGLDTS) and A37. Positions 90 and 95 each coordinate L-citrulline. G120 contacts ATP. L-aspartate is bound by residues T122, N126, and D127. N126 serves as a coordination point for L-citrulline. R130, S182, S191, E267, and Y279 together coordinate L-citrulline.

It belongs to the argininosuccinate synthase family. Type 1 subfamily. Homotetramer.

The protein localises to the cytoplasm. It carries out the reaction L-citrulline + L-aspartate + ATP = 2-(N(omega)-L-arginino)succinate + AMP + diphosphate + H(+). Its pathway is amino-acid biosynthesis; L-arginine biosynthesis; L-arginine from L-ornithine and carbamoyl phosphate: step 2/3. The polypeptide is Argininosuccinate synthase (Paraburkholderia phytofirmans (strain DSM 17436 / LMG 22146 / PsJN) (Burkholderia phytofirmans)).